The following is a 62-amino-acid chain: uncharacterized protein (62 aa).

Positions 1 to 62 (MSSTAEEMAA…SNGEAKRKEK (62 aa)) are disordered. Residues 28 to 37 (TKSDRVEHKH) are compositionally biased toward basic and acidic residues.

This is an uncharacterized protein from Caenorhabditis elegans.